A 220-amino-acid chain; its full sequence is ATP-dependent Clp protease proteolytic subunit 1 (220 aa).

The Nucleophile role is filled by serine 118. The active site involves histidine 143.

The protein belongs to the peptidase S14 family. In terms of assembly, fourteen ClpP subunits assemble into 2 heptameric rings which stack back to back to give a disk-like structure with a central cavity, resembling the structure of eukaryotic proteasomes.

It localises to the cytoplasm. The enzyme catalyses Hydrolysis of proteins to small peptides in the presence of ATP and magnesium. alpha-casein is the usual test substrate. In the absence of ATP, only oligopeptides shorter than five residues are hydrolyzed (such as succinyl-Leu-Tyr-|-NHMec, and Leu-Tyr-Leu-|-Tyr-Trp, in which cleavage of the -Tyr-|-Leu- and -Tyr-|-Trp bonds also occurs).. Functionally, cleaves peptides in various proteins in a process that requires ATP hydrolysis. Has a chymotrypsin-like activity. Plays a major role in the degradation of misfolded proteins. The sequence is that of ATP-dependent Clp protease proteolytic subunit 1 from Rhodococcus jostii (strain RHA1).